The primary structure comprises 319 residues: GTP 3',8-cyclase (319 aa).

One can recognise a Radical SAM core domain in the interval Lys-4–Leu-227. Arg-13 serves as a coordination point for GTP. [4Fe-4S] cluster is bound by residues Cys-20 and Cys-24. Residue Tyr-26 coordinates S-adenosyl-L-methionine. Residue Cys-27 coordinates [4Fe-4S] cluster. Arg-63 contacts GTP. Gly-67 is a binding site for S-adenosyl-L-methionine. Thr-94 lines the GTP pocket. Residue Ser-118 participates in S-adenosyl-L-methionine binding. GTP is bound at residue Lys-155. Met-189 contacts S-adenosyl-L-methionine. 2 residues coordinate [4Fe-4S] cluster: Cys-249 and Cys-252. Arg-254–Arg-256 is a binding site for GTP. Residue Cys-266 coordinates [4Fe-4S] cluster.

Belongs to the radical SAM superfamily. MoaA family. In terms of assembly, monomer and homodimer. [4Fe-4S] cluster is required as a cofactor.

It catalyses the reaction GTP + AH2 + S-adenosyl-L-methionine = (8S)-3',8-cyclo-7,8-dihydroguanosine 5'-triphosphate + 5'-deoxyadenosine + L-methionine + A + H(+). Its pathway is cofactor biosynthesis; molybdopterin biosynthesis. Functionally, catalyzes the cyclization of GTP to (8S)-3',8-cyclo-7,8-dihydroguanosine 5'-triphosphate. In Clostridium botulinum (strain ATCC 19397 / Type A), this protein is GTP 3',8-cyclase.